Consider the following 383-residue polypeptide: Transcription factor Sox-17-alpha (383 aa).

2 disordered regions span residues 1-20 (MSSP…KCSV) and 37-58 (NSLG…GKAE). The HMG box DNA-binding region spans 61 to 129 (IRRPMNAFMV…QHMQDHPNYK (69 aa)). The region spanning 267–382 (GSPVQGMMGC…TAVYYCNYPS (116 aa)) is the Sox C-terminal domain. Residues 331–339 (TEFEQYLSY) carry the 9aaTAD motif. A required for transcriptional activity and interaction with ctnnb1 region spans residues 332 to 337 (EFEQYL).

Interacts (via C-terminus) with ctnnb1/beta-catenin (via Armadillo repeats); this interaction is required for inhibition of wnt-signaling. As to expression, expressed throughout the deep and superficial endoderm during gastrulation. During neural and early tail bud stages, expression declines significantly in the anterior endoderm, except in the endoderm behind the cement gland. Strong expression persists in the endoderm posterior to the liver diverticulum until late tail bud stage. By late tailbud, expression is undetectable in most of the endoderm but is maintained in the presumptive gall bladder region and the extreme posterior region. In addition, expressed in endothelial cells in the head and along the flank of the embryo.

It is found in the nucleus. Its function is as follows. Transcription activator. Binds to the DNA sequence 5'-AACAAT-3'. All of the sox17 proteins are required for embryonic endoderm development and gastrulation movements, and show some redundancy in function. In addition, the sox17 proteins have distinct but overlapping roles in later gut development. Acts downstream of vegt-signaling in endoderm differentiation to induce a range of endodermal genes both directly (including endodermin and dhh/chh) and indirectly. Also represses wnt-responsive genes to inhibit wnt/beta-catenin signaling. In Xenopus tropicalis (Western clawed frog), this protein is Transcription factor Sox-17-alpha (sox17a).